The following is a 165-amino-acid chain: Nucleotide-binding protein Rcas_1283 (165 aa).

The protein belongs to the YajQ family.

In terms of biological role, nucleotide-binding protein. This is Nucleotide-binding protein Rcas_1283 from Roseiflexus castenholzii (strain DSM 13941 / HLO8).